Consider the following 689-residue polypeptide: MARPPLDQVRTIGIISHIDAGKTTVSERILFYTGETHKMGEVHDGEAVMDWMPQEQERGITITSTATVCTWRNHRLNLVDTPGHIDFTIEVERSLRVLDGAVTIFSAVEGVQPQSESVWRQADRYGVPRICFINKMDRVGADLRGTLRQMEEKLKARPVLLQLPVGEETGFRGVIDLLAEELITFADGDQGRTVSRGPVPADLLDAAREGRDAVAEAAADFDDAILADLLEGKDITAARLRGALRLGVLACRIFPVLLGSALRNKGIQPLLDAVVDFLPSPLDVPPAKGKRPGSETVDELPCDPGGPFCALAFKVQSEDGRKLTYLRVYSGTIKAGGAVWNSSRGCFEKLARLFRMHAHKREQIEEAAAGDIVAAAGLKEVLTGDTLCDPAHRIVLEGLAVPEPVVSLAVEARGVDDRDKLLPALEKLQWEDPTFRVHEDEETGQTILTGMGELHLEVVVDRLQREFGVGVKTGRPQVVYRETITRAVERREIFRAEHEGKVQGGEVLLQLSPLPRGAGVRVNVPDAAELGIGKELRDAVADSIGRACSAGARTGYPLTDLEVRVAAIPVEPGVTTDAGVRAAAGRGLMLAARDAGPTLLEPVMNLEIVIPADYAGKVLGSVQQKRGRIEGISSQGDTETIRASVPLAEMFGYMTELRSATKGRGTYTMEFSHYDRAPIEVLRRFGLEA.

The tr-type G domain occupies 7-282 (DQVRTIGIIS…AVVDFLPSPL (276 aa)). Residues 16–23 (SHIDAGKT), 80–84 (DTPGH), and 134–137 (NKMD) contribute to the GTP site.

This sequence belongs to the TRAFAC class translation factor GTPase superfamily. Classic translation factor GTPase family. EF-G/EF-2 subfamily.

The protein resides in the cytoplasm. Catalyzes the GTP-dependent ribosomal translocation step during translation elongation. During this step, the ribosome changes from the pre-translocational (PRE) to the post-translocational (POST) state as the newly formed A-site-bound peptidyl-tRNA and P-site-bound deacylated tRNA move to the P and E sites, respectively. Catalyzes the coordinated movement of the two tRNA molecules, the mRNA and conformational changes in the ribosome. This is Elongation factor G 1 from Geobacter sulfurreducens (strain ATCC 51573 / DSM 12127 / PCA).